The chain runs to 184 residues: Bifunctional protein PyrR (184 aa).

Residues 98–110 carry the PRPP-binding motif; the sequence is VVLVDDVLYTGRT.

This sequence belongs to the purine/pyrimidine phosphoribosyltransferase family. PyrR subfamily.

It catalyses the reaction UMP + diphosphate = 5-phospho-alpha-D-ribose 1-diphosphate + uracil. Functionally, regulates the transcription of the pyrimidine nucleotide (pyr) operon in response to exogenous pyrimidines. In terms of biological role, also displays a weak uracil phosphoribosyltransferase activity which is not physiologically significant. This chain is Bifunctional protein PyrR, found in Roseiflexus castenholzii (strain DSM 13941 / HLO8).